The chain runs to 398 residues: Alpha-2,8-sialyltransferase 8F (398 aa).

At 1 to 3 the chain is on the cytoplasmic side; it reads MRS. Residues 4-24 traverse the membrane as a helical; Signal-anchor for type II membrane protein segment; the sequence is GGTLFALIGSLMLLLLLRMLW. Over 25-398 the chain is Lumenal; it reads CPADAPARSR…KLQFSKCETA (374 aa). N-linked (GlcNAc...) asparagine glycans are attached at residues Asn66, Asn93, Asn151, and Asn196. 2 disulfides stabilise this stretch: Cys186–Cys335 and Cys200–Cys395. Residues Asn214, 236–238, and 322–324 contribute to the substrate site; these read NPS and STG. The active-site Proton donor/acceptor is His370.

This sequence belongs to the glycosyltransferase 29 family. In terms of tissue distribution, highly expressed in kidney and expressed and all tissues tested.

The protein resides in the golgi apparatus membrane. It carries out the reaction a ganglioside GM3 + CMP-N-acetyl-beta-neuraminate = a ganglioside GD3 + CMP + H(+). The enzyme catalyses a ganglioside GM3 (d18:1(4E)) + CMP-N-acetyl-beta-neuraminate = a ganglioside GD3 (d18:1(4E)) + CMP + H(+). The catalysed reaction is a ganglioside GD1a (d18:1(4E)) + CMP-N-acetyl-beta-neuraminate = a ganglioside GT1a (d18:1(4E)) + CMP + H(+). It catalyses the reaction a ganglioside GD1a + CMP-N-acetyl-beta-neuraminate = a ganglioside GT1a + CMP + H(+). It carries out the reaction a ganglioside GM1b (d18:1(4E)) + CMP-N-acetyl-beta-neuraminate = a ganglioside GD1c (d18:1(4E)) + CMP + H(+). The enzyme catalyses a ganglioside GM1b + CMP-N-acetyl-beta-neuraminate = a ganglioside GD1c + CMP + H(+). The catalysed reaction is a ganglioside GM4 (d18:1(4E)) + CMP-N-acetyl-beta-neuraminate = an N-acetyl-alpha-neuraminosyl-(2-&gt;8)-N-acetyl-alpha-neuraminosyl-(2-&gt;3)-beta-D-galactosyl-(1&lt;-&gt;1')-N-acylsphing-4-enine + CMP + H(+). It catalyses the reaction N-acetyl-alpha-neuraminosyl-(2-&gt;3)-beta-D-galactosyl-(1&lt;-&gt;1')-ceramide + CMP-N-acetyl-beta-neuraminate = N-acetyl-alpha-neuraminosyl-(2-&gt;8)-N-acetyl-alpha-neuraminosyl-(2-&gt;3)-beta-D-galactosyl-(1&lt;-&gt;1')-ceramide + CMP + H(+). It carries out the reaction a ganglioside GT1b (d18:1(4E)) + CMP-N-acetyl-beta-neuraminate = a ganglioside GQ1b (d18:1(4E)) + CMP + H(+). The enzyme catalyses a ganglioside GT1b + CMP-N-acetyl-beta-neuraminate = a ganglioside GQ1b + CMP + H(+). Its pathway is protein modification; protein glycosylation. Functionally, alpha-2,8-sialyltransferase that prefers O-glycans to N-glycans or glycolipids as acceptor substrates. The minimal acceptor substrate is the NeuAc-alpha-2,3(6)-Gal sequence at the non-reducing end of their carbohydrate groups. In Mus musculus (Mouse), this protein is Alpha-2,8-sialyltransferase 8F.